Consider the following 177-residue polypeptide: MSRIGKRPISIPSGVTATVEGQLVKAKGPKGELSYVVNDEVLVKFEENVISVMPRDQSKDARSKWGMSRSMIENIFCGVKDGFEKRLEINGVGYRAALQGKDIQLSLGFSHDVVYKVPSGVTVTVPKPTEIVISGIDKQQVGQVAAEIREYRRPEPYKGKGVKHADERIFRKEGKKK.

Residues 155-177 (EPYKGKGVKHADERIFRKEGKKK) form a disordered region.

This sequence belongs to the universal ribosomal protein uL6 family. In terms of assembly, part of the 50S ribosomal subunit.

Its function is as follows. This protein binds to the 23S rRNA, and is important in its secondary structure. It is located near the subunit interface in the base of the L7/L12 stalk, and near the tRNA binding site of the peptidyltransferase center. The sequence is that of Large ribosomal subunit protein uL6 from Bartonella tribocorum (strain CIP 105476 / IBS 506).